The sequence spans 96 residues: Small ribosomal subunit protein bS16 (96 aa).

This sequence belongs to the bacterial ribosomal protein bS16 family.

In Vesicomyosocius okutanii subsp. Calyptogena okutanii (strain HA), this protein is Small ribosomal subunit protein bS16.